A 746-amino-acid chain; its full sequence is MEINSKPMELLVTELNMLLKLLDHETLSCATEEKKMAVKNLLRQLQPSVTAKDYMYVNTSVYRNGTSFVESLFETFDCDLGDLKVEMEDQKKEPEANHTVTKPSKTDSPPPLPNTPPPEDYYEEAVPLSPGKMPEYITSRSSSSPPNSIEDGYYEDAENNYPTTQVNGRRKNSYNDSDALSSSYESYDEEEEEKGQRLTHQWPSEENSMAPVRDCHICAFLLRKKRFGQWAKQLTVIRENRLQCYKSSKDQSPYTDIPLSLCSVIYVPKDGRRKKHELRFTLPGGEALVLAVQSKEQAEKWLHVVRDVTGQGNGLDSPSSPMIPKKIELDKWCSAEKQTSDSDSMPSGESARDIRENGKPKRGALSELTGTVSRAAGRKITRIISFSKRKPPLPGDSRSSFDHDPRCGYVGVLVNRCWREHWCRVRAGSLYLYQEKGEQRVPHTTVGLKGCEVVPGLGPKHPFALRILKGGAEVAALEASCSEDMGRWLGVLLAETGSSADPESLHYDYVDVETIANIRTAARHSFLWATSTGSRTYDEVPFETEQENERLRGRAQTKRRSSFSSSDTGKPSPQITLKRHGSNANQYGRYGKTRAQEDARRYLKEKEDLETEIDSIRTALVALRKKKREAKEKMKSATDKQKLALEECVTKLEDSCRVKEGDRVDLELKLTQVKENLKKSLAGGEMEVPTESKPAHKTQRTEAQYMESFLPVNCASEMRKRPPSIYASTKGNVMQKAKEWESKKGT.

The interval 88-206 is disordered; that stretch reads EDQKKEPEAN…RLTHQWPSEE (119 aa). Residues 98–107 are compositionally biased toward polar residues; it reads HTVTKPSKTD. Residues 108–119 are compositionally biased toward pro residues; that stretch reads SPPPLPNTPPPE. The segment covering 139–148 has biased composition (low complexity); sequence SRSSSSPPNS. The PH 1 domain occupies 214-310; sequence DCHICAFLLR…WLHVVRDVTG (97 aa). The segment at 336–371 is disordered; that stretch reads EKQTSDSDSMPSGESARDIRENGKPKRGALSELTGT. Residues 350–359 show a composition bias toward basic and acidic residues; that stretch reads SARDIRENGK. Positions 406–497 constitute a PH 2 domain; it reads RCGYVGVLVN…WLGVLLAETG (92 aa). Disordered stretches follow at residues 539–596 and 723–746; these read EVPF…TRAQ and PSIYASTKGNVMQKAKEWESKKGT. Positions 562–575 are enriched in polar residues; the sequence is SFSSSDTGKPSPQI. Positions 591–682 form a coiled coil; that stretch reads GKTRAQEDAR…VKENLKKSLA (92 aa). Over residues 736–746 the composition is skewed to basic and acidic residues; sequence KAKEWESKKGT.

It localises to the cytoplasm. Its subcellular location is the cell projection. The protein localises to the podosome. It is found in the invadopodium. The protein resides in the cytoskeleton. It localises to the stress fiber. Functionally, may be involved in podosome and invadosome formation. This chain is Actin filament-associated protein 1-like 1 (afap1l1), found in Danio rerio (Zebrafish).